A 706-amino-acid chain; its full sequence is Polyribonucleotide nucleotidyltransferase (706 aa).

Mg(2+)-binding residues include Asp-487 and Asp-493. One can recognise a KH domain in the interval 553-612; the sequence is PRLFTMKISQDKIRDVIGKGGETIRSITAETGTEINIAEDGTITIAATTQEAGDAAKKRI. Positions 622–692 constitute an S1 motif domain; that stretch reads GKVYEGTVVK…DRGRVRLSIK (71 aa).

The protein belongs to the polyribonucleotide nucleotidyltransferase family. Requires Mg(2+) as cofactor.

It localises to the cytoplasm. The enzyme catalyses RNA(n+1) + phosphate = RNA(n) + a ribonucleoside 5'-diphosphate. In terms of biological role, involved in mRNA degradation. Catalyzes the phosphorolysis of single-stranded polyribonucleotides processively in the 3'- to 5'-direction. This Neisseria gonorrhoeae (strain ATCC 700825 / FA 1090) protein is Polyribonucleotide nucleotidyltransferase.